The sequence spans 193 residues: Acyl carrier protein phosphodiesterase (193 aa).

This sequence belongs to the AcpH family.

It catalyses the reaction holo-[ACP] + H2O = apo-[ACP] + (R)-4'-phosphopantetheine + H(+). In terms of biological role, converts holo-ACP to apo-ACP by hydrolytic cleavage of the phosphopantetheine prosthetic group from ACP. This chain is Acyl carrier protein phosphodiesterase, found in Shigella boydii serotype 4 (strain Sb227).